The chain runs to 545 residues: Delta 8-(E)-sphingolipid desaturase (545 aa).

In terms of domain architecture, Cytochrome b5 heme-binding spans 1–82 (MASHTKDALL…MLAFQIGRIQ (82 aa)). Heme contacts are provided by His-42 and His-65. Residues 97-124 (FRHYDENADSEEDDTSGQSQPPSPIFDA) form a disordered region. Residues 227–247 (LGWYSVSAVFLGCFWHQLVFS) traverse the membrane as a helical segment. Positions 249–253 (HDAGH) match the Histidine box-1 motif. Residues 262 to 282 (VDSIIGILIADFLGGLSLGWW) form a helical membrane-spanning segment. Positions 286-290 (HNVHH) match the Histidine box-2 motif. 2 consecutive transmembrane segments (helical) span residues 382–402 (IAGQ…CSIP) and 408–428 (LSFL…ITLS). The short motif at 470-474 (QAIHH) is the Histidine box-3 element.

This sequence belongs to the fatty acid desaturase type 1 family.

The protein resides in the membrane. The enzyme catalyses an N-acylsphing-4-enine + 2 Fe(II)-[cytochrome b5] + O2 + 2 H(+) = a (4E,8E)-4-sphinga-4,8-dienine ceramide + 2 Fe(III)-[cytochrome b5] + 2 H2O. Its pathway is lipid metabolism; sphingolipid metabolism. In terms of biological role, delta(8)-fatty-acid desaturase which introduces a double bond at the 8-position in the long-chain base (LCB) of ceramides. Required for the formation of the di-unsaturated sphingoid base (E,E)-sphinga-4,8-dienine during glucosylceramide (GluCer) biosynthesis. Plays an important role in conidiation. The sequence is that of Delta 8-(E)-sphingolipid desaturase from Emericella nidulans (strain FGSC A4 / ATCC 38163 / CBS 112.46 / NRRL 194 / M139) (Aspergillus nidulans).